The following is a 213-amino-acid chain: NADH dehydrogenase [ubiquinone] iron-sulfur protein 7, mitochondrial (213 aa).

A mitochondrion-targeting transit peptide spans 1 to 37 (MAVLSAPGLRGFRILGLRSSVGPAVQARSVHQSVATD). Positions 30-44 (VHQSVATDGPSSTQP) are enriched in polar residues. Residues 30–53 (VHQSVATDGPSSTQPALPKARAVA) are disordered. Residues C88 and C89 each coordinate [4Fe-4S] cluster. At R111 the chain carries Hydroxyarginine. [4Fe-4S] cluster-binding residues include C153 and C183.

This sequence belongs to the complex I 20 kDa subunit family. As to quaternary structure, core subunit of respiratory chain NADH dehydrogenase (Complex I) which is composed of 45 different subunits. This is a component of the iron-sulfur (IP) fragment of the enzyme. Requires [4Fe-4S] cluster as cofactor. In terms of processing, hydroxylated ar Arg-111 by NDUFAF5 early in the pathway of assembly of complex I, before the formation of the juncture between peripheral and membrane arms.

Its subcellular location is the mitochondrion inner membrane. It catalyses the reaction a ubiquinone + NADH + 5 H(+)(in) = a ubiquinol + NAD(+) + 4 H(+)(out). Its function is as follows. Core subunit of the mitochondrial membrane respiratory chain NADH dehydrogenase (Complex I) which catalyzes electron transfer from NADH through the respiratory chain, using ubiquinone as an electron acceptor. Essential for the catalytic activity of complex I. In Pan troglodytes (Chimpanzee), this protein is NADH dehydrogenase [ubiquinone] iron-sulfur protein 7, mitochondrial (NDUFS7).